The chain runs to 1135 residues: Potassium channel subfamily T member 2 (1135 aa).

The Cytoplasmic portion of the chain corresponds to 1–63 (MVDLESEVPP…KNQRSSLRIR (63 aa)). The helical transmembrane segment at 64 to 84 (LFNFSLKLLSCLLYIIRVLLE) threads the bilayer. The Extracellular portion of the chain corresponds to 85-101 (KPSQGSEWSHIFWVNRS). The chain crosses the membrane as a helical span at residues 102–122 (LPLWGLQVSVALISLFETILL). Residues 123–137 (GYLSYKGNIWEQILR) lie on the Cytoplasmic side of the membrane. Residues 138–158 (IPFILEIINAVPFIISIFWPT) traverse the membrane as a helical segment. Residues 159-164 (LRNLFV) are Extracellular-facing. A helical transmembrane segment spans residues 165 to 185 (PVFLNCWLAKHALENMINDLH). The Cytoplasmic segment spans residues 186–198 (RAIQRTQSAMFNQ). The helical transmembrane segment at 199–219 (VLILISTLLCLIFTCICGIQH) threads the bilayer. Residues 220–228 (LERIGKKLN) lie on the Extracellular side of the membrane. Residues 229–249 (LFDSLYFCIVTFSTVGFGDVT) constitute an intramembrane region (pore-forming). At 250–256 (PETWSSK) the chain is on the extracellular side. Residues 257 to 277 (LFVVAMICVALVVLPIQFEQL) form a helical membrane-spanning segment. Residues 278-1135 (AYLWMERQKS…VQDSREETQL (858 aa)) lie on the Cytoplasmic side of the membrane. RCK N-terminal domains follow at residues 299–435 (EKHV…DHVV) and 718–858 (NKLI…CYSL). Disordered stretches follow at residues 982–1036 (DTKD…AEKI) and 1111–1135 (PNSE…ETQL). Over residues 1010–1030 (LRRKSMQWARRLSRKGPKHSG) the composition is skewed to basic residues. Polar residues predominate over residues 1111 to 1122 (PNSEPSRKNSIC).

The protein belongs to the potassium channel family. Calcium-activated (TC 1.A.1.3) subfamily. KCa4.2/KCNT2 sub-subfamily. In terms of assembly, homotetramer. Forms heteromeric channels with KCNT1. These heterodimer channels differ from the homomers in their unitary conductance, kinetic behavior, subcellular localization, and response to activation of protein kinase C. Post-translationally, phosphorylated by protein kinase C. Phosphorylation of the C-terminal domain inhibits channel activity. In terms of tissue distribution, within the dorsal root ganglia (DRGs), exclusively expressed in small-sized and medium-sized calcitonin gene-related peptide (CGRP)-containing DRG neurons.

It localises to the cell membrane. The catalysed reaction is K(+)(in) = K(+)(out). Its activity is regulated as follows. Are normally in a closed state unless activated by an increase in intracellular Na(+) and Cl(-). Inhibited upon stimulation of G-protein coupled receptors, such as CHRM1 and GRM1. There is conflicting data about the effect of ATP on KNCT2 channels activity. Intracellular ATP was initially report to inhibit the channel activity. However, others studies conclude that KNCT2 channels are not inhibited by intracellular ATP. Its function is as follows. Sodium-activated and chloride-activated potassium channel. Produces rapidly activating outward rectifier K(+) currents. Contributes to regulate neuronal excitability. In Mus musculus (Mouse), this protein is Potassium channel subfamily T member 2 (Kcnt2).